A 345-amino-acid polypeptide reads, in one-letter code: Protein PXR1 (345 aa).

2 disordered regions span residues 1 to 25 and 166 to 317; these read MGLA…SNNN and VEDE…ASRL. The region spanning 25 to 71 is the G-patch domain; that stretch reads NNQFGHQYLTKMGWTPGKGIGLVPDSITTHLKINIKTDNAGLGAKLQ. Over residues 187–227 the composition is skewed to basic residues; it reads KKEKKEKKEKKEKKEKKEKKEKKEKKEKKEKKEKKEKKEKK. Positions 228 to 237 are enriched in basic and acidic residues; it reads EKKEKSDKKE. The segment covering 238–278 has biased composition (basic residues); that stretch reads KKEKKDKKEKKEKKEKKEKKEKKEKKEKKEKKEKKEKKEKK. The span at 279–288 shows a compositional bias: basic and acidic residues; it reads EKKDKLDKES. Over residues 289–312 the composition is skewed to polar residues; it reads SNAANVESTKSLVSDSSRESTPTP.

The protein belongs to the PINX1 family.

It is found in the nucleus. It localises to the nucleolus. Functionally, involved in rRNA-processing at A0, A1 and A2 sites and negatively regulates telomerase. The protein is Protein PXR1 (PXR1) of Lodderomyces elongisporus (strain ATCC 11503 / CBS 2605 / JCM 1781 / NBRC 1676 / NRRL YB-4239) (Yeast).